Consider the following 693-residue polypeptide: tRNA (guanine(37)-N(1))-methyltransferase (693 aa).

S-adenosyl-L-methionine is bound by residues Arg-327, 365–366 (DI), and 392–393 (DA). The tract at residues 497–572 (AGDSHQSNSH…QKAEDAPTNE (76 aa)) is disordered. Over residues 500–512 (SHQSNSHQSNPHE) the composition is skewed to low complexity. Residue Asn-591 participates in S-adenosyl-L-methionine binding.

This sequence belongs to the class I-like SAM-binding methyltransferase superfamily. TRM5/TYW2 family. In terms of assembly, monomer.

It localises to the mitochondrion matrix. Its subcellular location is the nucleus. The protein resides in the cytoplasm. The catalysed reaction is guanosine(37) in tRNA + S-adenosyl-L-methionine = N(1)-methylguanosine(37) in tRNA + S-adenosyl-L-homocysteine + H(+). Its function is as follows. Specifically methylates the N1 position of guanosine-37 in various cytoplasmic and mitochondrial tRNAs. Methylation is not dependent on the nature of the nucleoside 5' of the target nucleoside. This is the first step in the biosynthesis of wybutosine (yW), a modified base adjacent to the anticodon of tRNAs and required for accurate decoding. The chain is tRNA (guanine(37)-N(1))-methyltransferase from Plasmodium vivax (strain Salvador I).